The chain runs to 495 residues: Heterogeneous nuclear ribonucleoprotein Q (495 aa).

The span at 1–10 (MSDARDNDDR) shows a compositional bias: basic and acidic residues. Residues 1-101 (MSDARDNDDR…KPPSPIDDED (101 aa)) are disordered. 2 stretches are compositionally biased toward acidic residues: residues 11–46 (VDFE…DDDV) and 67–101 (MEDV…DDED). RRM domains are found at residues 116-194 (SEVF…LSET), 196-278 (NRLF…WADP), and 292-368 (KALY…LAKP). Residues 452-495 (MPMAAAPPQRPRRNDRNNGSSGGSGRDNSHEHDGNRGGRRYRPY) are disordered. A compositionally biased stretch (basic and acidic residues) spans 478–487 (DNSHEHDGNR).

As to quaternary structure, interacts with LHP1 in the nucleus on a common set of chromatin regions. In terms of tissue distribution, predominantly expressed in vascular and meristematic tissues. Expressed throughout development in seedlings, roots, leaves, floral buds and siliques.

It localises to the nucleus. It is found in the cytoplasm. The protein resides in the microsome. Transcriptional activator that binds DNA on GAGA-like motif and 5'-(C/G)ACGTG(G/T)C(A/G)-3' consensus motif in the promoters of target genes. Component of ribonucleosomes, which are complexes of at least 20 other different heterogeneous nuclear ribonucleoproteins (hnRNP). hnRNP play an important role in processing of precursor mRNA in the nucleus. Required during flower development and for cell fate determination. Acts both as an antagonist and as a promoter of polycomb LHP1 gene regulation activity, depending of target genes, to regulate the transcription of stress-responsive and flowering genes. May regulate histone H3 trimethylation on lysine 27 (H3K27me3). Recognizes and binds histone H3 tails methylated at 'Lys-4' (H3K4me) and acetylated at 'Lys-9' (H3K9ac), leading to epigenetic activation. When in complex with LHP1, recognizes and binds histone H3 tails methylated at 'Lys-4' (H3K4me) and 'Lys-27' (H3K27me), mostly corresponding to stress-responsive genes. May function as a suppressor of cell-autonomous immune responses involving glucosinolates, salicylic acid (SA) and jasmonic acid (JA) pathways toward pathogenic bacteria and fungi. The sequence is that of Heterogeneous nuclear ribonucleoprotein Q from Arabidopsis thaliana (Mouse-ear cress).